The following is a 274-amino-acid chain: NH(3)-dependent NAD(+) synthetase (274 aa).

Gly-46 to Ser-53 provides a ligand contact to ATP. Position 52 (Asp-52) interacts with Mg(2+). Residue Arg-140 coordinates deamido-NAD(+). Thr-160 serves as a coordination point for ATP. Position 165 (Glu-165) interacts with Mg(2+). 2 residues coordinate deamido-NAD(+): Lys-173 and Asp-180. Residues Lys-189 and Thr-211 each contribute to the ATP site. His-260–Lys-261 serves as a coordination point for deamido-NAD(+).

This sequence belongs to the NAD synthetase family. Homodimer.

The catalysed reaction is deamido-NAD(+) + NH4(+) + ATP = AMP + diphosphate + NAD(+) + H(+). It functions in the pathway cofactor biosynthesis; NAD(+) biosynthesis; NAD(+) from deamido-NAD(+) (ammonia route): step 1/1. Catalyzes the ATP-dependent amidation of deamido-NAD to form NAD. Uses ammonia as a nitrogen source. The chain is NH(3)-dependent NAD(+) synthetase from Streptococcus pyogenes serotype M1.